The following is a 325-amino-acid chain: Lactonase drp35 (325 aa).

Positions 46, 108, 110, 128, 131, 133, 136, 183, 234, and 235 each coordinate Ca(2+). Asp-234 functions as the Proton donor in the catalytic mechanism.

The protein belongs to the SMP-30/CGR1 family. Ca(2+) is required as a cofactor.

The protein resides in the cytoplasm. Exhibits lactonase activity. Acts in cells with perturbed membrane integrity and is possibly related to the membrane homeostasis. This chain is Lactonase drp35 (drp35), found in Staphylococcus epidermidis (strain ATCC 12228 / FDA PCI 1200).